Reading from the N-terminus, the 284-residue chain is Probable O-methyltransferase ustE (284 aa).

Residues Asn-22 and Asn-29 are each glycosylated (N-linked (GlcNAc...) asparagine). 2 consecutive transmembrane segments (helical) span residues 88 to 108 (LLLLFMDILAAAKHFWFVLTV) and 157 to 177 (YLATGFIIFAVGLVTECVCEI). The N-linked (GlcNAc...) asparagine glycan is linked to Asn-205. The chain crosses the membrane as a helical span at residues 215–235 (GLALASGGMIYGMSIAMFFMW). Asn-264 carries an N-linked (GlcNAc...) asparagine glycan.

Belongs to the class VI-like SAM-binding methyltransferase superfamily. Isoprenylcysteine carboxyl methyltransferase family.

It localises to the membrane. The protein operates within secondary metabolite biosynthesis. Its function is as follows. Probable O-methyltransferase; part of the gene cluster that mediates the biosynthesis of ustilaginoidins, dimeric gamma-naphthopyrones isolated from different fungal species. The first step in the biosynthesis of ustilaginoidins is the production of gamma-naphthopyrone precursor YWA1 by the non-reducing polyketide synthase ustP, via condensation of one acetyl-CoA starter unit with 6 malonyl-CoA units. YWA1 is then probably substrate of the ustZ to yield norrubrofusarin via a dehydration reaction. A key enzyme in the biosynthetic pathway is the laccase ustL, which catalyzes the oxidative dimerization of norrubrofusarin to ustilaginoidin A. It can produce the M- and P-atropisomers in varying amounts, depending on the reaction conditions. For the biosynthesis of 3-methylustilaginoid in derivatives such as chaetochromin A, a methylated derivative of YWA1 is required. The C-methylation is considered to be catalyzed by ustM, the phosphopantetheine attachment site of which indicates that it acts on the growing polyketide chain before release of the product. For the biosynthesis of chaetochromin A, it is assumed that saturation of the D2 double bond takes place before dimerization, and is probably catalyzed by an external reductase because no candidate gene was identified within the cluster. The chain is Probable O-methyltransferase ustE from Ustilaginoidea virens (Rice false smut fungus).